We begin with the raw amino-acid sequence, 505 residues long: RNA-splicing ligase RtcB homolog (505 aa).

4 residues coordinate Mn(2+): D119, C122, H227, and H259. 226-230 (NHYAE) contacts GMP. S300 carries the phosphoserine modification. A Mn(2+)-binding site is contributed by H353. Residues 353 to 354 (HN), 402 to 405 (GGTM), S409, and 428 to 431 (HGAG) contribute to the GMP site. The GMP-histidine intermediate role is filled by H428. K496 is covalently cross-linked (Glycyl lysine isopeptide (Lys-Gly) (interchain with G-Cter in SUMO2)). GMP is bound at residue K504.

Belongs to the RtcB family. In terms of assembly, catalytic component of the tRNA-splicing ligase complex. The cofactor is Mn(2+).

It localises to the nucleus. The protein resides in the cytoplasm. It carries out the reaction a 3'-end 3'-phospho-ribonucleotide-RNA + a 5'-end dephospho-ribonucleoside-RNA + GTP = a ribonucleotidyl-ribonucleotide-RNA + GMP + diphosphate. The enzyme catalyses a 3'-end 2',3'-cyclophospho-ribonucleotide-RNA + a 5'-end dephospho-ribonucleoside-RNA + GTP + H2O = a ribonucleotidyl-ribonucleotide-RNA + GMP + diphosphate + H(+). Protein archease stimulates the activity of the tRNA ligase complex with high efficiency in the presence of GTP. Its function is as follows. Catalytic subunit of the tRNA-splicing ligase complex that acts by directly joining spliced tRNA halves to mature-sized tRNAs by incorporating the precursor-derived splice junction phosphate into the mature tRNA as a canonical 3',5'-phosphodiester. May act as an RNA ligase with broad substrate specificity, and may function toward other RNAs. The sequence is that of RNA-splicing ligase RtcB homolog from Homo sapiens (Human).